The chain runs to 618 residues: Proline--tRNA ligase (618 aa).

Belongs to the class-II aminoacyl-tRNA synthetase family. ProS type 1 subfamily. Homodimer.

The protein resides in the cytoplasm. The catalysed reaction is tRNA(Pro) + L-proline + ATP = L-prolyl-tRNA(Pro) + AMP + diphosphate. Functionally, catalyzes the attachment of proline to tRNA(Pro) in a two-step reaction: proline is first activated by ATP to form Pro-AMP and then transferred to the acceptor end of tRNA(Pro). As ProRS can inadvertently accommodate and process non-cognate amino acids such as alanine and cysteine, to avoid such errors it has two additional distinct editing activities against alanine. One activity is designated as 'pretransfer' editing and involves the tRNA(Pro)-independent hydrolysis of activated Ala-AMP. The other activity is designated 'posttransfer' editing and involves deacylation of mischarged Ala-tRNA(Pro). The misacylated Cys-tRNA(Pro) is not edited by ProRS. This is Proline--tRNA ligase from Streptococcus equi subsp. equi (strain 4047).